Reading from the N-terminus, the 91-residue chain is DNA-directed RNA polymerase subunit omega (91 aa).

This sequence belongs to the RNA polymerase subunit omega family. In terms of assembly, the RNAP catalytic core consists of 2 alpha, 1 beta, 1 beta' and 1 omega subunit. When a sigma factor is associated with the core the holoenzyme is formed, which can initiate transcription.

It catalyses the reaction RNA(n) + a ribonucleoside 5'-triphosphate = RNA(n+1) + diphosphate. Its function is as follows. Promotes RNA polymerase assembly. Latches the N- and C-terminal regions of the beta' subunit thereby facilitating its interaction with the beta and alpha subunits. This is DNA-directed RNA polymerase subunit omega from Shigella flexneri.